The sequence spans 503 residues: Cobyric acid synthase (503 aa).

The 200-residue stretch at 251–450 folds into the GATase cobBQ-type domain; the sequence is DLDIAVIRLP…IHGIFENAAF (200 aa). Cysteine 331 serves as the catalytic Nucleophile. Histidine 442 is an active-site residue.

Belongs to the CobB/CobQ family. CobQ subfamily.

The protein operates within cofactor biosynthesis; adenosylcobalamin biosynthesis. Functionally, catalyzes amidations at positions B, D, E, and G on adenosylcobyrinic A,C-diamide. NH(2) groups are provided by glutamine, and one molecule of ATP is hydrogenolyzed for each amidation. The sequence is that of Cobyric acid synthase from Dehalococcoides mccartyi (strain CBDB1).